Here is a 1057-residue protein sequence, read N- to C-terminus: Carbamoyl phosphate synthase large chain (1057 aa).

The tract at residues 1-401 (MPKREDINKI…ATQKAIRSLD (401 aa)) is carboxyphosphate synthetic domain. Residues arginine 129, arginine 169, glycine 175, glycine 176, glutamine 208, isoleucine 210, glutamate 215, glycine 241, isoleucine 242, histidine 243, glutamine 284, and glutamate 298 each contribute to the ATP site. The ATP-grasp 1 domain maps to 133-327 (RALMNDLNEP…IAKVAAKIAV (195 aa)). 3 residues coordinate Mg(2+): glutamine 284, glutamate 298, and asparagine 300. Mn(2+) is bound by residues glutamine 284, glutamate 298, and asparagine 300. The interval 402–546 (IDINYIGDEE…YSTYELENES (145 aa)) is oligomerization domain. The interval 547 to 929 (IVSNRKSIVV…ALYKAFEGAK (383 aa)) is carbamoyl phosphate synthetic domain. The ATP-grasp 2 domain maps to 671–861 (NKLIQANGIR…MARLATRAIL (191 aa)). Residues arginine 707, glutamine 746, leucine 748, glutamate 752, glycine 777, valine 778, histidine 779, serine 780, glutamine 820, and glutamate 832 each coordinate ATP. Mg(2+)-binding residues include glutamine 820, glutamate 832, and asparagine 834. Residues glutamine 820, glutamate 832, and asparagine 834 each contribute to the Mn(2+) site. Residues 930–1057 (MHMPDHGKVL…ESQAFTTLHL (128 aa)) form the MGS-like domain. Positions 930–1057 (MHMPDHGKVL…ESQAFTTLHL (128 aa)) are allosteric domain.

Belongs to the CarB family. In terms of assembly, composed of two chains; the small (or glutamine) chain promotes the hydrolysis of glutamine to ammonia, which is used by the large (or ammonia) chain to synthesize carbamoyl phosphate. Tetramer of heterodimers (alpha,beta)4. Mg(2+) serves as cofactor. Requires Mn(2+) as cofactor.

The catalysed reaction is hydrogencarbonate + L-glutamine + 2 ATP + H2O = carbamoyl phosphate + L-glutamate + 2 ADP + phosphate + 2 H(+). The enzyme catalyses hydrogencarbonate + NH4(+) + 2 ATP = carbamoyl phosphate + 2 ADP + phosphate + 2 H(+). It participates in amino-acid biosynthesis; L-arginine biosynthesis; carbamoyl phosphate from bicarbonate: step 1/1. It functions in the pathway pyrimidine metabolism; UMP biosynthesis via de novo pathway; (S)-dihydroorotate from bicarbonate: step 1/3. Large subunit of the glutamine-dependent carbamoyl phosphate synthetase (CPSase). CPSase catalyzes the formation of carbamoyl phosphate from the ammonia moiety of glutamine, carbonate, and phosphate donated by ATP, constituting the first step of 2 biosynthetic pathways, one leading to arginine and/or urea and the other to pyrimidine nucleotides. The large subunit (synthetase) binds the substrates ammonia (free or transferred from glutamine from the small subunit), hydrogencarbonate and ATP and carries out an ATP-coupled ligase reaction, activating hydrogencarbonate by forming carboxy phosphate which reacts with ammonia to form carbamoyl phosphate. This Pediococcus pentosaceus (strain ATCC 25745 / CCUG 21536 / LMG 10740 / 183-1w) protein is Carbamoyl phosphate synthase large chain.